The chain runs to 464 residues: Argininosuccinate lyase (464 aa).

The protein belongs to the lyase 1 family. Argininosuccinate lyase subfamily.

The protein localises to the cytoplasm. It carries out the reaction 2-(N(omega)-L-arginino)succinate = fumarate + L-arginine. It participates in amino-acid biosynthesis; L-arginine biosynthesis; L-arginine from L-ornithine and carbamoyl phosphate: step 3/3. This is Argininosuccinate lyase from Pseudomonas savastanoi pv. phaseolicola (strain 1448A / Race 6) (Pseudomonas syringae pv. phaseolicola (strain 1448A / Race 6)).